The chain runs to 440 residues: Protein disulfide-isomerase A6 (440 aa).

An N-terminal signal peptide occupies residues methionine 1–glycine 19. Thioredoxin domains are found at residues leucine 20–glutamine 133 and glutamine 151–alanine 287. Cysteine 55 and cysteine 58 are joined by a disulfide. A phosphoserine mark is found at serine 129, serine 156, and serine 158. Residues leucine 139–aspartate 161 form a disordered region. Positions glycine 152–aspartate 161 are enriched in basic and acidic residues. Cysteines 190 and 193 form a disulfide. Residues glycine 399–leucine 440 are disordered. Acidic residues predominate over residues leucine 419 to leucine 440. Serine 428 is subject to Phosphoserine. The Prevents secretion from ER signature appears at lysine 437 to leucine 440.

Belongs to the protein disulfide isomerase family. In terms of assembly, part of a large chaperone multiprotein complex comprising DNAJB11, HSP90B1, HSPA5, HYOU, PDIA2, PDIA4, PDIA6, PPIB, SDF2L1, UGGT1 and very small amounts of ERP29, but not, or at very low levels, CALR nor CANX. Interacts with MICA on the surface of tumor cells, leading to MICA disulfide bond reduction which is required for its release from tumor cells. Interacts with ITGB3 following platelet stimulation. Interacts with ERN1; the interaction is direct. Interacts with EIF2AK3.

It is found in the endoplasmic reticulum lumen. The protein resides in the cell membrane. The protein localises to the melanosome. The catalysed reaction is Catalyzes the rearrangement of -S-S- bonds in proteins.. Its function is as follows. May function as a chaperone that inhibits aggregation of misfolded proteins. Negatively regulates the unfolded protein response (UPR) through binding to UPR sensors such as ERN1, which in turn inactivates ERN1 signaling. May also regulate the UPR via the EIF2AK3 UPR sensor. Plays a role in platelet aggregation and activation by agonists such as convulxin, collagen and thrombin. The sequence is that of Protein disulfide-isomerase A6 (Pdia6) from Mus musculus (Mouse).